Consider the following 807-residue polypeptide: 85/88 kDa calcium-independent phospholipase A2 (807 aa).

Phosphoserine is present on Ser13. 9 ANK repeats span residues 120–147, 151–181, 185–215, 219–248, 251–281, 286–312, 316–345, 349–378, and 382–403; these read WTVT…ANST, EGCT…QMDV, KGET…GLNQ, QGLT…RCNI, PGGF…QIHS, YGAS…DVDS, SGNT…NAGA, HGNT…EVDT, and FGET…KALL. Helical transmembrane passes span 481 to 501 and 512 to 532; these read LLCL…LIAI and LFDW…ILHS. A PNPLA domain is found at 482-666; the sequence is LCLDGGGVKG…LANNPTLDAM (185 aa). A GXGXXG motif is present at residues 486–491; it reads GGGVKG. Positions 518–522 match the GXSXG motif; the sequence is GTSTG. Ser520 (nucleophile) is an active-site residue. The active-site Proton acceptor is the Asp653. Residues 653 to 655 carry the DGA/G motif; that stretch reads DGG. The interval 678–687 is calmodulin-binding (1-9-14 motif); that stretch reads RKGQGNKVKK. The tract at residues 749-760 is calmodulin-binding (IQ motif); sequence AWCEMVGIQYFR.

As to quaternary structure, homodimer formed by catalytic domains tightly interacting through a large hydrophobic interface. The contact area involves 3 alpha helices, several loops and a part of the beta sheet from each monomer. Both active sites of the dimer are in close proximity adopting an open conformation that provide sufficient space for phospholipid access and favoring cooperativity in deacylation-reacylation reactions. Each monomer has 9 ankyrin repeats stacked side-by-side in an elongated structure oriented outwards from the catalytic core. As to expression, expressed in pancreatic beta-cells. Expressed in skeletal muscle (at protein level).

The protein localises to the cytoplasm. The protein resides in the cell membrane. It localises to the mitochondrion. It is found in the cell projection. Its subcellular location is the pseudopodium. It catalyses the reaction a 1,2-diacyl-sn-glycero-3-phosphocholine + H2O = a 1-acyl-sn-glycero-3-phosphocholine + a fatty acid + H(+). The catalysed reaction is a 1-O-alkyl-2-acyl-sn-glycero-3-phosphocholine + H2O = a 1-O-alkyl-sn-glycero-3-phosphocholine + a fatty acid + H(+). The enzyme catalyses 1,2-dihexadecanoyl-sn-glycero-3-phosphocholine + H2O = 1-hexadecanoyl-sn-glycero-3-phosphocholine + hexadecanoate + H(+). It carries out the reaction 1-hexadecanoyl-2-(9Z-octadecenoyl)-sn-glycero-3-phosphocholine + H2O = 1-hexadecanoyl-sn-glycero-3-phosphocholine + (9Z)-octadecenoate + H(+). It catalyses the reaction 1-hexadecanoyl-2-(9Z,12Z-octadecadienoyl)-sn-glycero-3-phosphocholine + H2O = (9Z,12Z)-octadecadienoate + 1-hexadecanoyl-sn-glycero-3-phosphocholine + H(+). The catalysed reaction is 1-hexadecanoyl-2-(5Z,8Z,11Z,14Z-eicosatetraenoyl)-sn-glycero-3-phosphocholine + H2O = 1-hexadecanoyl-sn-glycero-3-phosphocholine + (5Z,8Z,11Z,14Z)-eicosatetraenoate + H(+). The enzyme catalyses 1-octadecanoyl-2-(5Z,8Z,11Z,14Z-eicosatetraenoyl)-sn-glycero-3-phosphocholine + H2O = 1-octadecanoyl-sn-glycero-3-phosphocholine + (5Z,8Z,11Z,14Z)-eicosatetraenoate + H(+). It carries out the reaction 1-hexadecanoyl-2-(5Z,8Z,11Z,14Z-eicosatetraenoyl)-sn-glycero-3-phosphoethanolamine + H2O = 1-hexadecanoyl-sn-glycero-3-phosphoethanolamine + (5Z,8Z,11Z,14Z)-eicosatetraenoate + H(+). It catalyses the reaction 1,2-dihexadecanoyl-sn-glycero-3-phosphate + H2O = 1-hexadecanoyl-sn-glycero-3-phosphate + hexadecanoate + H(+). The catalysed reaction is a 1-acyl-sn-glycero-3-phosphocholine + H2O = sn-glycerol 3-phosphocholine + a fatty acid + H(+). The enzyme catalyses 1-hexadecanoyl-sn-glycero-3-phosphocholine + H2O = sn-glycerol 3-phosphocholine + hexadecanoate + H(+). It carries out the reaction 1-(5Z,8Z,11Z,14Z-eicosatetraenoyl)-sn-glycero-3-phosphocholine + H2O = sn-glycerol 3-phosphocholine + (5Z,8Z,11Z,14Z)-eicosatetraenoate + H(+). It catalyses the reaction 2-(5Z,8Z,11Z,14Z)-eicosatetraenoyl-sn-glycero-3-phosphocholine + H2O = sn-glycerol 3-phosphocholine + (5Z,8Z,11Z,14Z)-eicosatetraenoate + H(+). The catalysed reaction is 1-O-hexadecyl-2-(5Z,8Z,11Z,14Z)-eicosatetraenoyl-sn-glycero-3-phosphocholine + H2O = 1-O-hexadecyl-sn-glycero-3-phosphocholine + (5Z,8Z,11Z,14Z)-eicosatetraenoate + H(+). The enzyme catalyses 1-O-hexadecyl-2-acetyl-sn-glycero-3-phosphocholine + H2O = 1-O-hexadecyl-sn-glycero-3-phosphocholine + acetate + H(+). It carries out the reaction hexadecanoyl-CoA + H2O = hexadecanoate + CoA + H(+). It catalyses the reaction 1',3'-bis[1,2-di-(9Z-octadecenoyl)-sn-glycero-3-phospho]-glycerol + H2O = 1'-[1,2-di-(9Z-octadecenoyl)-sn-glycero-3-phospho]-3'-[1-(9Z-octadecenoyl)-sn-glycero-3-phospho]-glycerol + (9Z)-octadecenoate + H(+). The catalysed reaction is 1'-[1,2-di-(9Z-octadecenoyl)-sn-glycero-3-phospho]-3'-[1-(9Z-octadecenoyl)-sn-glycero-3-phospho]-glycerol + H2O = 1',3'-bis-[1-(9Z-octadecenoyl)-sn-glycero-3-phospho]-glycerol + (9Z)-octadecenoate + H(+). The enzyme catalyses 1',3'-bis-[1,2-di-(9Z,12Z-octadecadienoyl)-sn-glycero-3-phospho]-glycerol + H2O = 1'-[1,2-di-(9Z,12Z-octadecadienoyl)-sn-glycero-3-phospho]-3'-[1-(9Z,12Z-octadecadienoyl)-sn-glycero-3-phospho]-glycerol + (9Z,12Z)-octadecadienoate + H(+). It carries out the reaction 1-octadecanoyl-2-(15-hydroxy-(5Z,8Z,11Z,13E)-eicosatetraenoyl)-sn-glycero-3-phosphoethanolamine + H2O = 1-octadecanoyl-sn-glycero-3-phosphoethanolamine + 15-hydroxy-(5Z,8Z,11Z,13E)-eicosatetraenoate + H(+). With respect to regulation, activated by ATP. Inhibited by calcium-activated calmodulin. Inhibited by bromoenol lactone (BEL). Calcium-independent phospholipase involved in phospholipid remodeling with implications in cellular membrane homeostasis, mitochondrial integrity and signal transduction. Hydrolyzes the ester bond of the fatty acyl group attached at sn-1 or sn-2 position of phospholipids (phospholipase A1 and A2 activity respectively), producing lysophospholipids that are used in deacylation-reacylation cycles. Hydrolyzes both saturated and unsaturated long fatty acyl chains in various glycerophospholipid classes such as phosphatidylcholines, phosphatidylethanolamines and phosphatidates, with a preference for hydrolysis at sn-2 position. Can further hydrolyze lysophospholipids carrying saturated fatty acyl chains (lysophospholipase activity). Upon oxidative stress, contributes to remodeling of mitochondrial phospholipids in pancreatic beta cells, in a repair mechanism to reduce oxidized lipid content. Preferentially hydrolyzes oxidized polyunsaturated fatty acyl chains from cardiolipins, yielding monolysocardiolipins that can be reacylated with unoxidized fatty acyls to regenerate native cardiolipin species. Hydrolyzes oxidized glycerophosphoethanolamines present in pancreatic islets, releasing oxidized polyunsaturated fatty acids such as hydroxyeicosatetraenoates (HETEs). Has thioesterase activity toward fatty-acyl CoA releasing CoA-SH known to facilitate fatty acid transport and beta-oxidation in mitochondria particularly in skeletal muscle. Plays a role in regulation of membrane dynamics and homeostasis. Selectively hydrolyzes sn-2 arachidonoyl group in plasmalogen phospholipids, structural components of lipid rafts and myelin. Regulates F-actin polymerization at the pseudopods, which is required for both speed and directionality of MCP1/CCL2-induced monocyte chemotaxis. Targets membrane phospholipids to produce potent lipid signaling messengers. Generates lysophosphatidate (LPA, 1-acyl-glycerol-3-phosphate), which acts via G-protein receptors in various cell types. Has phospholipase A2 activity toward platelet-activating factor (PAF, 1-O-alkyl-2-acetyl-sn-glycero-3-phosphocholine), likely playing a role in inactivation of this potent pro-inflammatory signaling lipid. In response to glucose, amplifies calcium influx in pancreatic beta cells to promote INS secretion. The chain is 85/88 kDa calcium-independent phospholipase A2 (Pla2g6) from Rattus norvegicus (Rat).